A 238-amino-acid polypeptide reads, in one-letter code: Survival of motor neuron-related-splicing factor 30 (238 aa).

In terms of domain architecture, Tudor spans 72 to 132 (SWKVGEKCMA…RPVEEGRKAK (61 aa)). Positions 142-160 (KKEMIAAQREYKKKKALKK) match the Nuclear localization signal motif.

It belongs to the SMN family. As to quaternary structure, associates with spliceosomes.

The protein resides in the nucleus speckle. It is found in the nucleus. It localises to the cajal body. Functionally, involved in spliceosome assembly. This Xenopus tropicalis (Western clawed frog) protein is Survival of motor neuron-related-splicing factor 30 (smndc1).